The sequence spans 384 residues: MVMTSPTRKPSGDVRPDEPLHHLDQPFREFLDGLPADRPPWFCFFSSGLLHVLHHFLRFTPERLNCVFICSGLSKEEAELRDRMSGGRPVFDMTEQVGSHEIFELLVRNLDRPFGIVDVDCFVTETDWFERCMDGLEPGVAVSGPLSYGPIPLAAPPFLALDPRVRPDIERAIGGTVTPAAYSYTAPGPEKEIDGAMVRLIEPHHERALARVVALEGPRLPFPQGGLVDVLDDGREVRSHERYHHLQNGNEVIRVVFDGLMFYQLMALAAGLRIAHFHSFPGTKVFAPQLVHAGGISYWHRLRPSEIAAGINELPWAAHVDALLLEEFNRRADVPASYRTRGTRLAANLRRSMVDMAGLRDELRAKLDSSGVDVTDPRWAVVLG.

The catalysed reaction is dTDP-L-dihydrostreptose + streptidine 6-phosphate = O-(1-&gt;4)-alpha-L-dihydrostreptosyl-streptidine 6-phosphate + dTDP + H(+). It functions in the pathway antibiotic biosynthesis; streptomycin biosynthesis. Functionally, is probably a dihydrostreptosyl glycosyltransferase, involved in the first glycosylation step condensing streptidine-6-phosphate and dihydrostreptose. The polypeptide is dTDP-dihydrostreptose--streptidine-6-phosphate dihydrostreptosyltransferase (strH) (Streptomyces griseus).